Reading from the N-terminus, the 69-residue chain is Cytochrome b-c1 complex subunit 6-1, mitochondrial (69 aa).

2 disulfides stabilise this stretch: C17–C59 and C31–C45.

It belongs to the UQCRH/QCR6 family. Component of the ubiquinol-cytochrome c oxidoreductase (cytochrome b-c1 complex, complex III, CIII), a multisubunit enzyme composed of 10 subunits. The complex is composed of 3 respiratory subunits cytochrome b (MT-CYB), cytochrome c1 (CYC1-1 or CYC1-2) and Rieske protein (UCR1-1 or UCR1-2), 2 core protein subunits MPPalpha1 (or MPPalpha2) and MPPB, and 5 low-molecular weight protein subunits QCR7-1 (or QCR7-2), UCRQ-1 (or UCRQ-2), QCR9, UCRY and probably QCR6-1 (or QCR6-2). The complex exists as an obligatory dimer and forms supercomplexes (SCs) in the inner mitochondrial membrane with NADH-ubiquinone oxidoreductase (complex I, CI), resulting in different assemblies (supercomplexes SCI(1)III(2) and SCI(2)III(4)).

It is found in the mitochondrion inner membrane. In terms of biological role, component of the ubiquinol-cytochrome c oxidoreductase, a multisubunit transmembrane complex that is part of the mitochondrial electron transport chain which drives oxidative phosphorylation. The respiratory chain contains 3 multisubunit complexes succinate dehydrogenase (complex II, CII), ubiquinol-cytochrome c oxidoreductase (cytochrome b-c1 complex, complex III, CIII) and cytochrome c oxidase (complex IV, CIV), that cooperate to transfer electrons derived from NADH and succinate to molecular oxygen, creating an electrochemical gradient over the inner membrane that drives transmembrane transport and the ATP synthase. The cytochrome b-c1 complex catalyzes electron transfer from ubiquinol to cytochrome c, linking this redox reaction to translocation of protons across the mitochondrial inner membrane, with protons being carried across the membrane as hydrogens on the quinol. In the process called Q cycle, 2 protons are consumed from the matrix, 4 protons are released into the intermembrane space and 2 electrons are passed to cytochrome c. The sequence is that of Cytochrome b-c1 complex subunit 6-1, mitochondrial (QCR6-1) from Arabidopsis thaliana (Mouse-ear cress).